We begin with the raw amino-acid sequence, 228 residues long: ATP-dependent dethiobiotin synthetase BioD (228 aa).

13–18 (DIGKTF) contacts ATP. T17 is a binding site for Mg(2+). Residue K38 is part of the active site. A substrate-binding site is contributed by S42. ATP-binding positions include D55, 116–119 (EGSG), 179–180 (NK), and 208–210 (PKI). Positions 55 and 116 each coordinate Mg(2+).

This sequence belongs to the dethiobiotin synthetase family. As to quaternary structure, homodimer. Requires Mg(2+) as cofactor.

It localises to the cytoplasm. It catalyses the reaction (7R,8S)-7,8-diammoniononanoate + CO2 + ATP = (4R,5S)-dethiobiotin + ADP + phosphate + 3 H(+). It functions in the pathway cofactor biosynthesis; biotin biosynthesis; biotin from 7,8-diaminononanoate: step 1/2. Its function is as follows. Catalyzes a mechanistically unusual reaction, the ATP-dependent insertion of CO2 between the N7 and N8 nitrogen atoms of 7,8-diaminopelargonic acid (DAPA, also called 7,8-diammoniononanoate) to form a ureido ring. The polypeptide is ATP-dependent dethiobiotin synthetase BioD (Clostridium perfringens (strain 13 / Type A)).